A 642-amino-acid chain; its full sequence is MPIITLPDGSQRHFDNPVSTLEVAQSIGPGLAKATIAGRVNGARVDACDLIEHDASLEIITTKDEVDGLEIVRHSCAHLLGHALKQLYPNAKMAIGPTIDSGFYYDIDLEQSLSQEDLEKIEARMVELAKTKYAVVKKKVSWQEARDTFESRGESYKMEILDENVARDDRPGLYHHEEYIDMCRGPHVPHMGFCQNFKLLNIAGAYWRGNSDNKMLQRIYGTAFHDKKALQAHLTRLEEAAKRDHRKIGKQLDLFHMQQEAPGMVFWHHNGWSIFRDLEIFIRQKLNEYGYQEVKGPLMMDRVLWERSGHWDKYADAMFTTSSENREYAIKPMNCPGHIQIFNQGLKSYRDLPLRMAEFGSCHRNEPSGSLHGIMRVRGFTQDDAHIFCTEDQIQQEVTSCIKMVYDTYTTFGFQNIVVKLSTRPEKRVGSDEIWDKSEQALIDSLKAMDIPFEIQEGEGAFYGPKIEFTLYDCLDRAWQCGTVQLDFNLPTRLGATYVGESNERLIPVMIHRAILGSLERFIGILIEEYAGFFPTWLAPEQAVVVNITDKQADYAHEVAQKLQKCGIRAKADLRNEKIGFKIREHTLKRVPYMLVCGDQEMEAGEIAVRTRKGKDLGKFKLDDFIAHIQAEIASRKLNLEE.

One can recognise a TGS domain in the interval 1–61; the sequence is MPIITLPDGS…EHDASLEIIT (61 aa). The segment at 244–535 is catalytic; it reads DHRKIGKQLD…LIEEYAGFFP (292 aa). 3 residues coordinate Zn(2+): Cys-335, His-386, and His-512.

The protein belongs to the class-II aminoacyl-tRNA synthetase family. As to quaternary structure, homodimer. It depends on Zn(2+) as a cofactor.

The protein localises to the cytoplasm. The catalysed reaction is tRNA(Thr) + L-threonine + ATP = L-threonyl-tRNA(Thr) + AMP + diphosphate + H(+). In terms of biological role, catalyzes the attachment of threonine to tRNA(Thr) in a two-step reaction: L-threonine is first activated by ATP to form Thr-AMP and then transferred to the acceptor end of tRNA(Thr). Also edits incorrectly charged L-seryl-tRNA(Thr). The polypeptide is Threonine--tRNA ligase (Vibrio cholerae serotype O1 (strain M66-2)).